Reading from the N-terminus, the 225-residue chain is Uridylate kinase (225 aa).

9-10 (GS) serves as a coordination point for ATP. Gly44 contacts UMP. Positions 45 and 49 each coordinate ATP. UMP is bound by residues Asp66 and 114-120 (THPGHTT). The ATP site is built by Thr140, Asn141, Tyr146, and Asp149.

It belongs to the UMP kinase family. Homohexamer.

It localises to the cytoplasm. It carries out the reaction UMP + ATP = UDP + ADP. The protein operates within pyrimidine metabolism; CTP biosynthesis via de novo pathway; UDP from UMP (UMPK route): step 1/1. Its activity is regulated as follows. Inhibited by UTP. Its function is as follows. Catalyzes the reversible phosphorylation of UMP to UDP. This chain is Uridylate kinase, found in Thermococcus gammatolerans (strain DSM 15229 / JCM 11827 / EJ3).